The chain runs to 110 residues: Large ribosomal subunit protein uL22 (110 aa).

Belongs to the universal ribosomal protein uL22 family. In terms of assembly, part of the 50S ribosomal subunit.

Its function is as follows. This protein binds specifically to 23S rRNA; its binding is stimulated by other ribosomal proteins, e.g. L4, L17, and L20. It is important during the early stages of 50S assembly. It makes multiple contacts with different domains of the 23S rRNA in the assembled 50S subunit and ribosome. In terms of biological role, the globular domain of the protein is located near the polypeptide exit tunnel on the outside of the subunit, while an extended beta-hairpin is found that lines the wall of the exit tunnel in the center of the 70S ribosome. This Campylobacter fetus subsp. fetus (strain 82-40) protein is Large ribosomal subunit protein uL22.